Here is a 351-residue protein sequence, read N- to C-terminus: Glycerol-1-phosphate dehydrogenase [NAD(P)+] (351 aa).

NAD(+) contacts are provided by residues 97-101 (GKVID) and 119-122 (TSPS). Asp-124 contributes to the substrate binding site. Residue Ser-128 coordinates NAD(+). Position 171 (Asp-171) interacts with substrate. The Zn(2+) site is built by Asp-171 and His-251. His-255 contributes to the substrate binding site. His-267 serves as a coordination point for Zn(2+).

It belongs to the glycerol-1-phosphate dehydrogenase family. In terms of assembly, homodimer. It depends on Zn(2+) as a cofactor.

It is found in the cytoplasm. It carries out the reaction sn-glycerol 1-phosphate + NAD(+) = dihydroxyacetone phosphate + NADH + H(+). The catalysed reaction is sn-glycerol 1-phosphate + NADP(+) = dihydroxyacetone phosphate + NADPH + H(+). Its pathway is membrane lipid metabolism; glycerophospholipid metabolism. In terms of biological role, catalyzes the NAD(P)H-dependent reduction of dihydroxyacetonephosphate (DHAP or glycerone phosphate) to glycerol 1-phosphate (G1P). The G1P thus generated is used as the glycerophosphate backbone of phospholipids in the cellular membranes of Archaea. In Saccharolobus islandicus (strain Y.N.15.51 / Yellowstone #2) (Sulfolobus islandicus), this protein is Glycerol-1-phosphate dehydrogenase [NAD(P)+].